The sequence spans 604 residues: Aspartate--tRNA(Asp/Asn) ligase (604 aa).

Glu175 is an L-aspartate binding site. The tract at residues 199-202 is aspartate; the sequence is QQFK. The L-aspartate site is built by Arg221 and His456. 221 to 223 is an ATP binding site; that stretch reads RDE. Glu496 is a binding site for ATP. Arg503 contributes to the L-aspartate binding site. 548-551 contributes to the ATP binding site; that stretch reads GVDR.

The protein belongs to the class-II aminoacyl-tRNA synthetase family. Type 1 subfamily. In terms of assembly, homodimer.

The protein localises to the cytoplasm. It carries out the reaction tRNA(Asx) + L-aspartate + ATP = L-aspartyl-tRNA(Asx) + AMP + diphosphate. Its function is as follows. Aspartyl-tRNA synthetase with relaxed tRNA specificity since it is able to aspartylate not only its cognate tRNA(Asp) but also tRNA(Asn). Reaction proceeds in two steps: L-aspartate is first activated by ATP to form Asp-AMP and then transferred to the acceptor end of tRNA(Asp/Asn). The chain is Aspartate--tRNA(Asp/Asn) ligase from Methylorubrum extorquens (strain CM4 / NCIMB 13688) (Methylobacterium extorquens).